A 138-amino-acid chain; its full sequence is Rubber elongation factor protein (138 aa).

The residue at position 2 (alanine 2) is an N-acetylalanine.

It belongs to the REF/SRPP family. As to quaternary structure, in solution, able to form amyloid fibers and aggregates rich in beta-sheets. Interaction with membrane stabilizes the protein, inhibiting the amyloid state and aggregation. In terms of processing, not glycosylated. Localized in all laticifer layers.

It is found in the cytoplasm. Its function is as follows. May be part of the rubber biosynthesis machinery. Plays a role in rubber elongation. The chain is Rubber elongation factor protein from Hevea brasiliensis (Para rubber tree).